Reading from the N-terminus, the 200-residue chain is Probable GTP-binding protein EngB (200 aa).

Positions Ser-26–Lys-200 constitute an EngB-type G domain. GTP contacts are provided by residues Gly-34 to Ser-41, Gly-61 to Gln-65, Asp-80 to Gly-83, Thr-147 to Asp-150, and Thr-179 to Ser-181. Ser-41 and Thr-63 together coordinate Mg(2+).

The protein belongs to the TRAFAC class TrmE-Era-EngA-EngB-Septin-like GTPase superfamily. EngB GTPase family. Mg(2+) serves as cofactor.

Necessary for normal cell division and for the maintenance of normal septation. This Ehrlichia chaffeensis (strain ATCC CRL-10679 / Arkansas) protein is Probable GTP-binding protein EngB.